Reading from the N-terminus, the 422-residue chain is Tk-subtilisin (422 aa).

Residues 1–24 (MKKSIALVLSIVLLAALFAVPASA) form the signal peptide. Positions 25-106 (GEQNTIRVIV…SWLGGGSTQP (82 aa)) are excised as a propeptide. The Peptidase S8 domain occupies 111–417 (PWGIERVKAP…YGVVRAALAV (307 aa)). Catalysis depends on charge relay system residues Asp-139, His-177, and Ser-348.

The protein belongs to the peptidase S8 family. In terms of assembly, monomer. Ca(2+) is required as a cofactor.

It localises to the secreted. Has a broad substrate specificity with a slight preference to large hydrophobic amino acid residues at the P1 position. This Thermococcus kodakarensis (strain ATCC BAA-918 / JCM 12380 / KOD1) (Pyrococcus kodakaraensis (strain KOD1)) protein is Tk-subtilisin.